The chain runs to 2057 residues: MADGSPRPPLYRSVSFKLLERWSGGPGPREEDADTPGLRRRASCRPAAAVPGQPSRRVSKLASGPPAAPAQPRPLRSLSPSVRQLSRRFDAAGLDDDSTGTRDGGCSSGTTEEAAEGSERGAWPSVTEMRKLFGGPSSRRPSMDSEALGSTSPDRVSWEPPTRDPRQPPTPPPRTCFPLAGLRSARPLSGPGIEGRRRRQHQQQERAQRPADGLHSWHSFSQPQAGARASSSSSIASSYPVSRSRAASSSEEEEEGPQSQLGPQSPAYLGGHSSGSDEDPNGEDGRRWRGRGLRPGRSQLVHGCSQDSDELNPGGLGSAGGVGSPEPPTSPRTSMDEWGTGTQPCLPGPQESLRPMSDTGGAPFRVAKVSFPAYLASPAGSRGSSRYSSTETLKDDDLWSSRSSVGWGVYRSPSFGTGDGLLLRPQTRSRSKGPVGTARPLRDGGLDLDKNRQRKSLSNPDIASETLTLLSFLRSDLSELRVRKPSGGPGNRPLDGRDSPSAGSPMEQSESTLSQSPTSPTTRPTLKDLTATLRRAKSFSCSEKPMARRLLRTSALKPSSSELLLAGSGAEEDPLPLVVQDQYVQEARQVFEKIQRMGAQQDDGNDVCPTSPDWAGDMTQGHRSQEELSGPESNLTDEGIGADPEPLGAAFCSLDPAGVWRPLSSTSAQTNHHLGAGTEDSLGGRALVSPETPPTPGALRRRRKVPPSGPNGTELSNGEASEAYRSLSDPIPQRHRAATSEEPSGFSVDSNLLGSLNSKTGLPVTPAMDEGLTSGHSDWSVVSEENKDYQEVIQSIVQGPGALGRMGEDRIAGKTPKKKSLSDPSRRGELTGPGFEGPGGEPIREVEPMLPPSSSEPILAEQWTEPEDPAPARGRAQSERSLPAPPASSTAHHDFHLDPKLTSVLSPRLTRRGSKKRPARSSHQELRREEGNQDQTGSLTQTRSSSKHVRHASVPATFTPIVVPEPAMSVGPPVAAPEPVGFPVRGHPALQAPSLEDVTKRYMLTLHSGDVPAPGPVDLPCLPPSAPPSTETKPSGAARATPDEPAPASKCCSKPQVDMRKHVTMTLLDTEQSYVESLRTLMQGYMQPLKQPENSLLCDPSLVDEIFDQIPELLEHHEQFLEQVRHCVQTWHAQQKVGALLVQSFSKDVLVNIYSAYIDNFLNAKDAVRVAKEARPAFLKFLEQSMRENKEKQALSDLMIKPVQRIPRYELLVKDLLKHTPEDHPDHPLLLDAQRNIKQVAERINKGVRSAEEAERHARVLQEIEAHIEGMEDLQAPLRRFLRQEMVIEVKAIGGKKDRSLFLFTDLIVCTTLKRKSGSLRRSSMSLYTAASVIDTASKYKMLWKLPLEDTDIIKGASQATNRETIQKAISRLDEDLATLGQMSKLSESLGFPHQSLDDALRDLSAAMHRDLSEKQALCCSLAFPPTKLELCATRPEGTDSYIFEFPHPDARLGFEQAFDEAKRKLASSKSCLDPEFLKAIPIMKTRSGMQFSCAAPTFSSCPEPAPEVWVCNSDGYVGQVCLLSLRAEPDVEACIAVCSARILCIGAVPGLQPRCPREQPEPLRNPPETTLESTGPELDVEATAEEEAATTLAEPGPQPCLHISISGSGLEMEPGPAKGDPQPELVPFDSDSDDESSPSPSGTLQSQASQSTISSSFGNEETPSSKEATAETTSSEEEQEPGFLSLSGSFGPGGPCGTSPMDGRALRRSSRGSFTRGSLEDLLSVDPEAYQSSVWLGTEDGCVHVYQSSDSIRDRRNSMKLQHAASVTCILYLNNKVFVSLANGELVVYQREAGRFWDPQNFKSMTLGSQGSPITKMVSVGGRLWCGCQNRVLVLSPDTLQLEHTFYVGQDSSRSVACMVDSSLGVWVTLKGSAHVCLYHPDTFEQLAEVDVTPPVHRMLAGSDAIIRQHKAACLRITALLVCAELLWVGTSAGVVLTIPTSPSTVSCPRAPLSPAGLCQGHTGHVRFLAAVQLPEGFNLLCSTPPPPPDTGPEKLPSLDHRDSPRRRGPTSARPKMLVISGGDGSEDFRLSSGGGGSSETVGRDDSTNHLLLWRV.

Disordered stretches follow at residues 20-361, 375-461, and 481-559; these read ERWS…DTGG, LASP…SNPD, and RVRK…LKPS. Residues S142 and S152 each carry the phosphoserine modification. Low complexity predominate over residues 227–249; it reads ARASSSSSIASSYPVSRSRAASS. Residues S305 and S308 each carry the phosphoserine modification. A compositionally biased stretch (gly residues) spans 314-323; the sequence is GGLGSAGGVG. 7 positions are modified to phosphoserine: S324, S330, S377, S381, S389, S404, and S414. Positions 382–391 are enriched in polar residues; sequence RGSSRYSSTE. Basic and acidic residues predominate over residues 440-451; that stretch reads PLRDGGLDLDKN. Residue S456 is modified to Phosphoserine. Residues 507–524 show a composition bias toward low complexity; that stretch reads EQSESTLSQSPTSPTTRP. Phosphoserine is present on residues S538 and S611. 2 disordered regions span residues 615 to 647 and 663 to 952; these read AGDMTQGHRSQEELSGPESNLTDEGIGADPEPL and LSST…VRHA. A compositionally biased stretch (polar residues) spans 663-672; the sequence is LSSTSAQTNH. S689 is subject to Phosphoserine. Residues T692 and T695 each carry the phosphothreonine modification. Residues 710–719 show a composition bias toward polar residues; that stretch reads PNGTELSNGE. S728 carries the phosphoserine modification. The segment covering 747-760 has biased composition (polar residues); that stretch reads SVDSNLLGSLNSKT. Basic and acidic residues predominate over residues 820–829; sequence SLSDPSRRGE. S906 is subject to Phosphoserine. Basic residues predominate over residues 909 to 920; it reads LTRRGSKKRPAR. Positions 922–931 are enriched in basic and acidic residues; that stretch reads SHQELRREEG. The segment covering 933 to 944 has biased composition (polar residues); the sequence is QDQTGSLTQTRS. S953 and S994 each carry phosphoserine. Residues 1015–1027 are compositionally biased toward pro residues; it reads GPVDLPCLPPSAP. A disordered region spans residues 1015-1054; it reads GPVDLPCLPPSAPPSTETKPSGAARATPDEPAPASKCCSK. In terms of domain architecture, DH spans 1059–1247; it reads MRKHVTMTLL…KQVAERINKG (189 aa). S1324 carries the phosphoserine modification. 2 disordered regions span residues 1555-1713 and 1983-2050; these read RCPR…SSRG and CSTP…DSTN. Acidic residues predominate over residues 1579-1589; sequence LDVEATAEEEA. Residues 1638–1674 show a composition bias toward low complexity; sequence SPSPSGTLQSQASQSTISSSFGNEETPSSKEATAETT.

Functionally, acts as a guanine nucleotide exchange factor (GEF) for RhoA GTPases. This is Rho guanine nucleotide exchange factor 17 (Arhgef17) from Mus musculus (Mouse).